The sequence spans 1032 residues: Putative oxidoreductase YgfK (1032 aa).

The 4Fe-4S ferredoxin-type domain occupies 928 to 958; the sequence is RFQTLHLDAYCNECGNCAQFCPWNGKPYKDK. [4Fe-4S] cluster-binding residues include cysteine 938, cysteine 941, cysteine 944, and cysteine 948.

The cofactor is [4Fe-4S] cluster.

Could be an iron-sulfur flavoprotein with NADPH:O(2) oxidoreductase activity. This Escherichia coli (strain K12) protein is Putative oxidoreductase YgfK (ygfK).